Here is a 379-residue protein sequence, read N- to C-terminus: Cytochrome b (379 aa).

Transmembrane regions (helical) follow at residues 33–53 (FGSL…FLAM), 77–98 (WLIR…FIHV), 113–133 (WNIG…GYVL), and 178–198 (FFAF…VHLL). 2 residues coordinate heme b: His83 and His97. Heme b is bound by residues His182 and His196. His201 provides a ligand contact to a ubiquinone. Helical transmembrane passes span 226 to 246 (IKDL…ALFF), 288 to 308 (LGGV…PLLN), 320 to 340 (VTQT…WIGG), and 347 to 367 (FTTI…ILIP).

It belongs to the cytochrome b family. As to quaternary structure, the cytochrome bc1 complex contains 11 subunits: 3 respiratory subunits (MT-CYB, CYC1 and UQCRFS1), 2 core proteins (UQCRC1 and UQCRC2) and 6 low-molecular weight proteins (UQCRH/QCR6, UQCRB/QCR7, UQCRQ/QCR8, UQCR10/QCR9, UQCR11/QCR10 and a cleavage product of UQCRFS1). This cytochrome bc1 complex then forms a dimer. Heme b is required as a cofactor.

Its subcellular location is the mitochondrion inner membrane. Its function is as follows. Component of the ubiquinol-cytochrome c reductase complex (complex III or cytochrome b-c1 complex) that is part of the mitochondrial respiratory chain. The b-c1 complex mediates electron transfer from ubiquinol to cytochrome c. Contributes to the generation of a proton gradient across the mitochondrial membrane that is then used for ATP synthesis. The protein is Cytochrome b (MT-CYB) of Akodon lindberghi (Lindbergh's grass mouse).